The primary structure comprises 625 residues: BTB/POZ domain-containing protein At5g48130 (625 aa).

The region spanning 41 to 105 (ASVHVRVCNK…IYGCPTLIHP (65 aa)) is the BTB domain. The NPH3 domain occupies 217–469 (DTWIKDLTDL…VQALFIQQLN (253 aa)). The segment covering 494 to 507 (VPSSRPLTSQQSPC) has biased composition (polar residues). Residues 494–513 (VPSSRPLTSQQSPCTDDETG) form a disordered region.

Belongs to the NPH3 family.

It functions in the pathway protein modification; protein ubiquitination. Functionally, may act as a substrate-specific adapter of an E3 ubiquitin-protein ligase complex (CUL3-RBX1-BTB) which mediates the ubiquitination and subsequent proteasomal degradation of target proteins. The protein is BTB/POZ domain-containing protein At5g48130 of Arabidopsis thaliana (Mouse-ear cress).